We begin with the raw amino-acid sequence, 612 residues long: Arginine--tRNA ligase (612 aa).

The short motif at 152 to 162 (PNIAKEMHVGH) is the 'HIGH' region element.

This sequence belongs to the class-I aminoacyl-tRNA synthetase family. Monomer.

The protein localises to the cytoplasm. It carries out the reaction tRNA(Arg) + L-arginine + ATP = L-arginyl-tRNA(Arg) + AMP + diphosphate. The sequence is that of Arginine--tRNA ligase from Prochlorococcus marinus (strain MIT 9313).